Reading from the N-terminus, the 508-residue chain is Probable ligand-gated ion channel 46 (508 aa).

A signal peptide spans 1–18 (MQYLQFLSLVVLLLMCHA). The Extracellular portion of the chain corresponds to 19 to 274 (RKSVYRRNSP…FEFKRRAGWY (256 aa)). N65, N134, N175, and N201 each carry an N-linked (GlcNAc...) asparagine glycan. C190 and C204 are oxidised to a cystine. A helical membrane pass occupies residues 275 to 295 (ILQAYLPTYLTICISWISFAL). At 296–301 (GSKAIP) the chain is on the cytoplasmic side. A helical transmembrane segment spans residues 302-321 (ARTMLGVNSLLAMTFQFGNI). Residues 322–335 (IRNLPRVSYVKAID) lie on the Extracellular side of the membrane. The helical transmembrane segment at 336-356 (VWMLSCMTFVFCSLLELAWVG) threads the bilayer. Residues 357 to 480 (YLSREEEPTS…KQRREILAHK (124 aa)) lie on the Cytoplasmic side of the membrane. The segment at 374 to 407 (AQVAPKPCHPPPVQQNANNSSVHRRQKQPKNEEE) is disordered. The helical transmembrane segment at 481-501 (IDSVSVFMFPFLFVLFNIAYW) threads the bilayer. Residues 502 to 508 (QHYLRGY) lie on the Extracellular side of the membrane.

This sequence belongs to the ligand-gated ion channel (TC 1.A.9) family. In terms of tissue distribution, expressed in the nervous system, with high expression in cholinergic motor neurons and weak expression in GABAergic motor neurons.

It is found in the presynaptic cell membrane. The protein localises to the cell projection. The protein resides in the axon. Its subcellular location is the cytoplasmic vesicle. It localises to the secretory vesicle. It is found in the synaptic vesicle. Probable component of a ligand-gated anion channel. Negatively regulates synaptic transmission and synaptic vesicle release in response to acetylcholine in cholinergic motor neurons. Role in synaptic vesicle release kinetics may be in association with the ligand-gated ion channel protein acc-4. The chain is Probable ligand-gated ion channel 46 from Caenorhabditis elegans.